The primary structure comprises 157 residues: MSLLIDIVDETGSVSEEMLKEVENLLQFAAEREGVQDQAEVSVTIVSNDDIHQINKEYRGKDAPTDVISFALEEEGEGEIEIVGAEMPPVLGDIIISADRTREQAEEYNHSFKRELGFLAVHGFLHLLGYDHMTKEEEEEMFTKQKELLDAYGLKRS.

Residues His-122, His-126, and His-132 each coordinate Zn(2+).

It belongs to the endoribonuclease YbeY family. Zn(2+) is required as a cofactor.

The protein localises to the cytoplasm. In terms of biological role, single strand-specific metallo-endoribonuclease involved in late-stage 70S ribosome quality control and in maturation of the 3' terminus of the 16S rRNA. The chain is Endoribonuclease YbeY from Bacillus subtilis (strain 168).